Consider the following 349-residue polypeptide: ALA-interacting subunit 3 (349 aa).

Residues 1 to 21 (MSSNTASSSAGAAGSGDSSAA) show a composition bias toward low complexity. Residues 1-30 (MSSNTASSSAGAAGSGDSSAARKNSKRPKY) are disordered. An N-acetylserine modification is found at S2. The chain crosses the membrane as a helical span at residues 50–70 (VISTFLIVSVIFIPLGVISLF). N181, N190, and N223 each carry an N-linked (GlcNAc...) asparagine glycan. A helical transmembrane segment spans residues 305 to 325 (LGIAYLTVGGICFILALAFTI).

The protein belongs to the CDC50/LEM3 family. As to quaternary structure, interacts with ALA2 and ALA3 in a heterologous system. As to expression, expressed in roots, leaves, stems, flowers and siliques.

It localises to the golgi apparatus membrane. It is found in the prevacuolar compartment membrane. The protein resides in the endoplasmic reticulum membrane. Its function is as follows. Required for the lipid transport activity of the ALA/ALIS P4-ATPase complex. The protein is ALA-interacting subunit 3 (ALIS3) of Arabidopsis thaliana (Mouse-ear cress).